Consider the following 139-residue polypeptide: D-ribose pyranase (139 aa).

Histidine 20 acts as the Proton donor in catalysis. Residues aspartate 28, histidine 106, and 128–130 (YAN) contribute to the substrate site.

The protein belongs to the RbsD / FucU family. RbsD subfamily. Homodecamer.

It localises to the cytoplasm. The catalysed reaction is beta-D-ribopyranose = beta-D-ribofuranose. It participates in carbohydrate metabolism; D-ribose degradation; D-ribose 5-phosphate from beta-D-ribopyranose: step 1/2. In terms of biological role, catalyzes the interconversion of beta-pyran and beta-furan forms of D-ribose. The polypeptide is D-ribose pyranase (Actinobacillus pleuropneumoniae serotype 5b (strain L20)).